The following is a 194-amino-acid chain: uncharacterized protein (194 aa).

It belongs to the mimivirus L114/R131 family.

This is an uncharacterized protein from Acanthamoeba polyphaga mimivirus (APMV).